Reading from the N-terminus, the 449-residue chain is MDMHPWLPNIKYIEEMLKSIGVNSIDDLFIDVPEEIKLKKELDLDYKKPLSEYEIILKLQELQNKNKRLKMPPFLGGGLCPHYVPEVVKFIIKRSEFYTAYTPYQPEISQGLLQALFEYQSLIAELFEMEVVNASLYDWGSALAEAIMMANRINKKKTVLVPKLMNPYHKEVVKTWTYGKGIKLVEIPPNERGTIDVSKLESMINEDDVSAIYIQQPNFYGIFEDEIEYIVDIAKKKKIITIMGVSPLALGLIKPPGEYEIDITVGDGQELGLSLNFGGPLLGILATRWDGQLVRQMPGRIVGLTKDSEGKRGFTLILQTREQFARREKATSNITTNEALMAIAAAVYLSLLGRNGIKELAKEIYIRSHYAKKRLEELGVNTVYNGDFFEEFAVDFRTDYDIIHSRLLEKNIHGGLKLGKTQALFCVTEVHTKSMIDELIESIREVFSG.

The protein belongs to the GcvP family. N-terminal subunit subfamily. The glycine cleavage system is composed of four proteins: P, T, L and H. In this organism, the P 'protein' is a heterodimer of two subunits.

The catalysed reaction is N(6)-[(R)-lipoyl]-L-lysyl-[glycine-cleavage complex H protein] + glycine + H(+) = N(6)-[(R)-S(8)-aminomethyldihydrolipoyl]-L-lysyl-[glycine-cleavage complex H protein] + CO2. Functionally, the glycine cleavage system catalyzes the degradation of glycine. The P protein binds the alpha-amino group of glycine through its pyridoxal phosphate cofactor; CO(2) is released and the remaining methylamine moiety is then transferred to the lipoamide cofactor of the H protein. This chain is Probable glycine dehydrogenase (decarboxylating) subunit 1, found in Sulfurisphaera tokodaii (strain DSM 16993 / JCM 10545 / NBRC 100140 / 7) (Sulfolobus tokodaii).